Reading from the N-terminus, the 311-residue chain is Putative dihydroorotate dehydrogenase A (fumarate) (311 aa).

Substrate contacts are provided by residues K45, 69–73 (NSMGL), and N128. An FMN-binding site is contributed by 45–46 (KT). N128 is a binding site for FMN. The active-site Nucleophile is C131. 2 residues coordinate FMN: K165 and V193. A substrate-binding site is contributed by 194 to 195 (NS). Residues G220, 248–249 (GG), and 270–271 (GT) each bind FMN.

This sequence belongs to the dihydroorotate dehydrogenase family. Type 1 subfamily. In terms of assembly, homodimer. FMN serves as cofactor.

Its subcellular location is the cytoplasm. The catalysed reaction is (S)-dihydroorotate + fumarate = orotate + succinate. The protein operates within pyrimidine metabolism; UMP biosynthesis via de novo pathway. Catalyzes the conversion of dihydroorotate to orotate with fumarate as the electron acceptor. The protein is Putative dihydroorotate dehydrogenase A (fumarate) (pyrD) of Streptococcus uberis (strain ATCC BAA-854 / 0140J).